Here is a 304-residue protein sequence, read N- to C-terminus: Probable casein kinase I homolog ECU03_0910 (304 aa).

Residues 8-304 (IKLVQKIASG…SDSMGDLEIL (297 aa)) enclose the Protein kinase domain. Residues 14 to 22 (IASGAFGDI) and Lys-37 each bind ATP. The Proton acceptor role is filled by Asp-129.

It belongs to the protein kinase superfamily. CK1 Ser/Thr protein kinase family. Casein kinase I subfamily.

Its subcellular location is the nucleus. The enzyme catalyses L-seryl-[protein] + ATP = O-phospho-L-seryl-[protein] + ADP + H(+). It catalyses the reaction L-threonyl-[protein] + ATP = O-phospho-L-threonyl-[protein] + ADP + H(+). Its function is as follows. Involved in DNA repair. May regulate the activity of protein(s) involved in double strand break repair caused by gamma rays. This chain is Probable casein kinase I homolog ECU03_0910, found in Encephalitozoon cuniculi (strain GB-M1) (Microsporidian parasite).